Here is a 504-residue protein sequence, read N- to C-terminus: Biotinidase (504 aa).

The N-terminal stretch at 1 to 20 (MFSFGTVFTFALLLIPLTEA) is a signal peptide. A CN hydrolase domain is found at 30–309 (YEHNLILNPD…GRLLVARVPV (280 aa)). Catalysis depends on Glu79, which acts as the Proton acceptor. N-linked (GlcNAc...) asparagine glycans are attached at residues Asn86 and Asn117. Residue Lys181 is the Proton donor of the active site. The Nucleophile role is filled by Cys214. N-linked (GlcNAc...) asparagine glycans are attached at residues Asn261, Asn365, and Asn375.

This sequence belongs to the carbon-nitrogen hydrolase superfamily. BTD/VNN family.

It is found in the secreted. It localises to the extracellular space. The enzyme catalyses biocytin + H2O = biotin + L-lysine. The catalysed reaction is biotin amide + H2O = biotin + NH4(+). Its function is as follows. Catalytic release of biotin from biocytin, the product of biotin-dependent carboxylases degradation. The polypeptide is Biotinidase (btd) (Takifugu rubripes (Japanese pufferfish)).